A 97-amino-acid polypeptide reads, in one-letter code: Large ribosomal subunit protein uL23 (97 aa).

This sequence belongs to the universal ribosomal protein uL23 family. As to quaternary structure, part of the 50S ribosomal subunit. Contacts protein L29, and trigger factor when it is bound to the ribosome.

Functionally, one of the early assembly proteins it binds 23S rRNA. One of the proteins that surrounds the polypeptide exit tunnel on the outside of the ribosome. Forms the main docking site for trigger factor binding to the ribosome. In Chelativorans sp. (strain BNC1), this protein is Large ribosomal subunit protein uL23.